Here is a 291-residue protein sequence, read N- to C-terminus: Probable 2-(5''-triphosphoribosyl)-3'-dephosphocoenzyme-A synthase (291 aa).

Belongs to the CitG/MdcB family.

The catalysed reaction is 3'-dephospho-CoA + ATP = 2'-(5''-triphospho-alpha-D-ribosyl)-3'-dephospho-CoA + adenine. Functionally, involved in the formation of 2-(5''-phosphoribosyl)-3'-dephosphocoenzyme-A, the prosthetic group of the acyl-carrier protein of the malonate decarboxylase. The protein is Probable 2-(5''-triphosphoribosyl)-3'-dephosphocoenzyme-A synthase of Pseudomonas syringae pv. syringae (strain B728a).